The following is a 192-amino-acid chain: Thymidine kinase (192 aa).

ATP contacts are provided by residues Ser-9–Ser-16 and Asp-87–Gln-90. Glu-88 (proton acceptor) is an active-site residue. Residues Cys-145, Cys-147, Cys-182, and His-185 each coordinate Zn(2+).

This sequence belongs to the thymidine kinase family. Homotetramer.

Its subcellular location is the cytoplasm. The catalysed reaction is thymidine + ATP = dTMP + ADP + H(+). The sequence is that of Thymidine kinase from Shewanella oneidensis (strain ATCC 700550 / JCM 31522 / CIP 106686 / LMG 19005 / NCIMB 14063 / MR-1).